The sequence spans 347 residues: tRNA pseudouridine synthase D (347 aa).

D81 serves as the catalytic Nucleophile. Positions 158-304 (GVPNYFGNQR…MRHDRRAIAL (147 aa)) constitute a TRUD domain.

The protein belongs to the pseudouridine synthase TruD family.

The catalysed reaction is uridine(13) in tRNA = pseudouridine(13) in tRNA. Responsible for synthesis of pseudouridine from uracil-13 in transfer RNAs. This is tRNA pseudouridine synthase D from Vibrio vulnificus (strain YJ016).